The primary structure comprises 519 residues: Exodeoxyribonuclease 7 large subunit (519 aa).

The tract at residues 500–519 is disordered; the sequence is VGRGKTRKPKEEPPAQGSLL.

Belongs to the XseA family. In terms of assembly, heterooligomer composed of large and small subunits.

The protein resides in the cytoplasm. It carries out the reaction Exonucleolytic cleavage in either 5'- to 3'- or 3'- to 5'-direction to yield nucleoside 5'-phosphates.. Functionally, bidirectionally degrades single-stranded DNA into large acid-insoluble oligonucleotides, which are then degraded further into small acid-soluble oligonucleotides. In Cereibacter sphaeroides (strain ATCC 17023 / DSM 158 / JCM 6121 / CCUG 31486 / LMG 2827 / NBRC 12203 / NCIMB 8253 / ATH 2.4.1.) (Rhodobacter sphaeroides), this protein is Exodeoxyribonuclease 7 large subunit.